The following is a 680-amino-acid chain: Probable Xaa-Pro aminopeptidase P (680 aa).

4 residues coordinate Mn(2+): aspartate 477, aspartate 488, glutamate 586, and glutamate 600.

The protein belongs to the peptidase M24B family. The cofactor is Mn(2+).

The enzyme catalyses Release of any N-terminal amino acid, including proline, that is linked to proline, even from a dipeptide or tripeptide.. Functionally, catalyzes the removal of a penultimate prolyl residue from the N-termini of peptides. This Podospora anserina (strain S / ATCC MYA-4624 / DSM 980 / FGSC 10383) (Pleurage anserina) protein is Probable Xaa-Pro aminopeptidase P (AMPP).